An 884-amino-acid chain; its full sequence is Blastomere cadherin (884 aa).

Positions 1 to 26 (MGGTDKFRYPSVWLCGLLCLLQVVPS) are cleaved as a signal peptide. The propeptide occupies 27 to 157 (INVDVSGCQP…KHTGLKRKKR (131 aa)). Cadherin domains are found at residues 158–265 (DWVI…RPKF), 266–378 (TQPV…APIF), 379–489 (DPKT…APVF), 490–595 (VPVV…DNGP), and 596–706 (VPSP…GFDL). The Extracellular segment spans residues 158-706 (DWVIPPIKVS…QEKLVAGFDL (549 aa)). Asn-427, Asn-560, and Asn-683 each carry an N-linked (GlcNAc...) asparagine glycan. Residues 707-730 (PIILVILGSILALLILSLLLLLFL) form a helical membrane-spanning segment. At 731 to 884 (KRKKVVKEPL…YGGDDDDDEE (154 aa)) the chain is on the cytoplasmic side.

Expressed in pituitary gland, lung and kidney.

It is found in the cell membrane. In terms of biological role, cadherins are calcium-dependent cell adhesion proteins. They preferentially interact with themselves in a homophilic manner in connecting cells; cadherins may thus contribute to the sorting of heterogeneous cell types. In Xenopus laevis (African clawed frog), this protein is Blastomere cadherin.